Consider the following 463-residue polypeptide: MSLIVTRFAPSPTGYLHIGGLRTAIFNYLFARANQGKFFLRIEDTDLSRNSIEAANAIIEAFKWVGLEYDGEILYQSKRFEIYKEYIQKLLDEDKAYYCYMSKDELDALREEQKARKETPRYDNRYRDFKGTPPKGIEPVVRIKVPQNEVIGFNDGVKGEVKVNTNELDDFIIARSDGTPTYNFVVIVDDALMGITDVIRGDDHLSNTPKQIVLYKALNFKIPNFFHVPMILNEEGQKLSKRHGATNVMDYQEMGYLKEALVNFLVRLGWSYQDKEIFSMQELLECFDPKDLNSSPSCFSWHKLNWLNAHYLKNQSAQKLLELLKPFSFSDLSHLNPAQLDRLLDALKERSQTLKELALKIDEVLIAPVEYEEKVFKKLNQALIMPLLEKFKLELKEANFNDESALENAMHKIIEEEKIKAGSFMQPLRLALLGKGGGIGLKEALFILGKTESVKRIENFLKN.

Residues 10–20 (PSPTGYLHIGG) carry the 'HIGH' region motif. The 'KMSKS' region motif lies at 238 to 242 (KLSKR). Lys-241 provides a ligand contact to ATP.

It belongs to the class-I aminoacyl-tRNA synthetase family. Glutamate--tRNA ligase type 1 subfamily. As to quaternary structure, monomer.

Its subcellular location is the cytoplasm. The enzyme catalyses tRNA(Glu) + L-glutamate + ATP = L-glutamyl-tRNA(Glu) + AMP + diphosphate. Its function is as follows. Catalyzes the attachment of glutamate to tRNA(Glu) in a two-step reaction: glutamate is first activated by ATP to form Glu-AMP and then transferred to the acceptor end of tRNA(Glu). This is Glutamate--tRNA ligase 1 from Helicobacter pylori (strain G27).